A 255-amino-acid chain; its full sequence is 3-hydroxyacyl-CoA dehydrogenase type-2 (255 aa).

S14, L16, D35, D58, V59, and C85 together coordinate NAD(+). S149 provides a ligand contact to substrate. Y162, K166, F195, and T197 together coordinate NAD(+). The active-site Proton acceptor is the Y162.

Belongs to the short-chain dehydrogenases/reductases (SDR) family. As to quaternary structure, component of mitochondrial ribonuclease P, a complex composed of rswl/MRPP1, scu/MRPP2 and mldr/MRPP3. Found in many tissues including CNS, imaginal disks and salivary glands. Highest expression in both embryonic gonadal primordia and mature ovaries and testes.

Its subcellular location is the mitochondrion. The enzyme catalyses a (3S)-3-hydroxyacyl-CoA + NAD(+) = a 3-oxoacyl-CoA + NADH + H(+). The catalysed reaction is (3S)-3-hydroxybutanoyl-CoA + NAD(+) = acetoacetyl-CoA + NADH + H(+). It carries out the reaction testosterone + NAD(+) = androst-4-ene-3,17-dione + NADH + H(+). It catalyses the reaction 5alpha-androstane-3alpha,17beta-diol + NAD(+) = 17beta-hydroxy-5alpha-androstan-3-one + NADH + H(+). The enzyme catalyses 17beta-estradiol + NAD(+) = estrone + NADH + H(+). The catalysed reaction is ursodeoxycholate + NAD(+) = 7-oxolithocholate + NADH + H(+). It carries out the reaction 3beta,7beta-dihydroxy-5beta-cholan-24-oate + NAD(+) = 3beta-hydroxy-7-oxo-5beta-cholan-24-oate + NADH + H(+). It catalyses the reaction 11-dehydrocorticosterone + NAD(+) = pregn-4-ene-3,11,20,21-tetraone + NADH + H(+). The enzyme catalyses cortisone + NAD(+) = 17alpha-hydroxypregn-4-en-3,11,20-trione-21-al + NADH + H(+). The catalysed reaction is cortisol + NAD(+) = 11beta,17alpha-dihydroxypregn-4-ene-3,20,21-trione + NADH + H(+). It carries out the reaction 5alpha-pregnan-20beta-ol-3-one + NAD(+) = 5alpha-pregnane-3,20-dione + NADH + H(+). It catalyses the reaction 17beta-hydroxy-5alpha-androstan-3-one + NAD(+) = 5alpha-androstan-3,17-dione + NADH + H(+). Its function is as follows. Mitochondrial dehydrogenase involved in pathways of fatty acid, and steroid metabolism. Versatile enzyme presenting two types of activity; L-3-hydroxyacyl-CoA dehydrogenase ((3S)-3-hydroxyacyl-CoA dehydrogenase) activity and hydroxysteroid dehydrogenase (HSD) activity with a wide substrate spectrum. As a (3S)-3-hydroxyacyl-CoA dehydrogenase, it functions in the third step of the fatty acid beta-oxidation pathway, a major metabolic process in which fatty acids are oxidized to provide a significant source of energy, while also generating acyl-CoA metabolites used by many metabolic routes. As a HSD, it functions in the degradation pathways of glucocorticoids and sex steroids and epimerization of bile acids; catalyzes the beta-oxidation at position 17 of androgens and estrogens, has 3-alpha-hydroxysteroid dehydrogenase activity with androsterone, and carries out oxidative conversions of 7-beta-hydroxylated bile acids like ursodeoxycholate or isoursodeoxycholate (also known as 3-beta,7-beta-dihydroxy-5-beta-cholan-24-oate or 7-beta-hydroxyisolithocholate, respectively). Also exhibits 20-beta-OH and 21-OH dehydrogenase activities with C21 steroids. Essential for structural and functional integrity of mitochondria. Required for cell survival during embryonic development. May play a role in germline formation. In terms of biological role, in addition to mitochondrial dehydrogenase activity, moonlights as a component of mitochondrial ribonuclease P, a complex that cleaves tRNA molecules in their 5'-ends. Essential for the structural and functional integrity of mitochondria. Function is essential for pupal development. The protein is 3-hydroxyacyl-CoA dehydrogenase type-2 of Drosophila melanogaster (Fruit fly).